Reading from the N-terminus, the 510-residue chain is Probable cytochrome P450 517A2 (510 aa).

Residues 1–21 (MRILIIIILIIIVFLVKDTIK) traverse the membrane as a helical segment. Residue C450 participates in heme binding.

The protein belongs to the cytochrome P450 family. It depends on heme as a cofactor.

It localises to the membrane. In Dictyostelium discoideum (Social amoeba), this protein is Probable cytochrome P450 517A2 (cyp517A2).